The following is a 508-amino-acid chain: Steroid 17-alpha-hydroxylase/17,20 lyase (508 aa).

Substrate is bound at residue Asn202. Cys442 contacts heme.

Belongs to the cytochrome P450 family. It depends on heme as a cofactor.

The protein resides in the endoplasmic reticulum membrane. It is found in the microsome membrane. It carries out the reaction a C21-steroid + reduced [NADPH--hemoprotein reductase] + O2 = a 17alpha-hydroxy-C21-steroid + oxidized [NADPH--hemoprotein reductase] + H2O + H(+). The catalysed reaction is progesterone + reduced [NADPH--hemoprotein reductase] + O2 = 17alpha-hydroxyprogesterone + oxidized [NADPH--hemoprotein reductase] + H2O + H(+). It catalyses the reaction pregnenolone + reduced [NADPH--hemoprotein reductase] + O2 = 17alpha-hydroxypregnenolone + oxidized [NADPH--hemoprotein reductase] + H2O + H(+). The enzyme catalyses 17alpha-hydroxyprogesterone + reduced [NADPH--hemoprotein reductase] + O2 = androst-4-ene-3,17-dione + acetate + oxidized [NADPH--hemoprotein reductase] + H2O + 2 H(+). It carries out the reaction 17alpha-hydroxyprogesterone + reduced [NADPH--hemoprotein reductase] + O2 = 16alpha,17alpha-dihydroxyprogesterone + oxidized [NADPH--hemoprotein reductase] + H2O + H(+). The catalysed reaction is 16alpha,17alpha-dihydroxyprogesterone + reduced [NADPH--hemoprotein reductase] + O2 = 6beta,16alpha,17alpha-trihydroxyprogesterone + oxidized [NADPH--hemoprotein reductase] + H2O + H(+). It catalyses the reaction 17alpha-hydroxypregnenolone + reduced [NADPH--hemoprotein reductase] + O2 = 3beta-hydroxyandrost-5-en-17-one + acetate + oxidized [NADPH--hemoprotein reductase] + H2O + 2 H(+). The enzyme catalyses 16alpha,17alpha-dihydroxypregnenolone + reduced [NADPH--hemoprotein reductase] + O2 = 3beta,16alpha-dihydroxy-androst-5-en-17-one + acetate + oxidized [NADPH--hemoprotein reductase] + H2O + 2 H(+). It carries out the reaction 3beta-hydroxyandrost-5-en-17-one + reduced [NADPH--hemoprotein reductase] + O2 = 3beta,16alpha-dihydroxy-androst-5-en-17-one + oxidized [NADPH--hemoprotein reductase] + H2O + H(+). The catalysed reaction is androst-4-ene-3,17-dione + reduced [NADPH--hemoprotein reductase] + O2 = 16alpha-hydroxyandrost-4-ene-3,17-dione + oxidized [NADPH--hemoprotein reductase] + H2O + H(+). It participates in steroid hormone biosynthesis. The protein operates within steroid biosynthesis; glucocorticoid biosynthesis. Regulated predominantly by intracellular cAMP levels. The 17,20-lyase activity is stimulated by cytochrome b5, which acts as an allosteric effector increasing the Vmax of the lyase activity. Functionally, a cytochrome P450 monooxygenase involved in corticoid and androgen biosynthesis. Catalyzes 17-alpha hydroxylation of C21 steroids, which is common for both pathways. A second oxidative step, required only for androgen synthesis, involves an acyl-carbon cleavage. The 17-alpha hydroxy intermediates, as part of adrenal glucocorticoids biosynthesis pathway, are precursors of cortisol. Hydroxylates steroid hormones, pregnenolone and progesterone to form 17-alpha hydroxy metabolites, followed by the cleavage of the C17-C20 bond to form C19 steroids, dehydroepiandrosterone (DHEA) and androstenedione. Has 16-alpha hydroxylase activity. Catalyzes 16-alpha hydroxylation of 17-alpha hydroxy pregnenolone, followed by the cleavage of the C17-C20 bond to form 16-alpha-hydroxy DHEA. Also 16-alpha hydroxylates androgens, relevant for estriol synthesis. Mechanistically, uses molecular oxygen inserting one oxygen atom into a substrate, and reducing the second into a water molecule, with two electrons provided by NADPH via cytochrome P450 reductase (CPR; NADPH-ferrihemoprotein reductase). In Macaca fascicularis (Crab-eating macaque), this protein is Steroid 17-alpha-hydroxylase/17,20 lyase (CYP17A1).